The sequence spans 221 residues: Type 3 secretion system stator protein (221 aa).

The protein belongs to the SctL stator family. In terms of assembly, the core secretion machinery of the T3SS is composed of approximately 20 different proteins, including cytoplasmic components, a base, an export apparatus and a needle. This subunit is part of the cytosolic complex. Interacts directly with YscN/SctN (T3SS ATPase) and YscQ/SctQ (the major sorting platform component).

The protein localises to the cytoplasm. Functionally, component of the type III secretion system (T3SS), also called injectisome, which is used to inject bacterial effector proteins into eukaryotic host cells. Acts as a regulator of the YscN/SctN ATPase activity. The sequence is that of Type 3 secretion system stator protein from Yersinia pestis.